Here is a 406-residue protein sequence, read N- to C-terminus: Elongation factor Tu, chloroplastic (406 aa).

Positions 8 to 210 constitute a tr-type G domain; it reads KTHINIATIG…LLDSYIPKPK (203 aa). GTP contacts are provided by residues 17-24, 77-81, and 132-135; these read GHFNHGKT, DCPGH, and NKED. Position 24 (threonine 24) interacts with Mg(2+).

It belongs to the TRAFAC class translation factor GTPase superfamily. Classic translation factor GTPase family. EF-Tu/EF-1A subfamily. In terms of assembly, monomer.

Its subcellular location is the plastid. It localises to the chloroplast. The enzyme catalyses GTP + H2O = GDP + phosphate + H(+). Functionally, GTP hydrolase that promotes the GTP-dependent binding of aminoacyl-tRNA to the A-site of ribosomes during protein biosynthesis. In Chaetosphaeridium globosum (Charophycean green alga), this protein is Elongation factor Tu, chloroplastic (tufA).